We begin with the raw amino-acid sequence, 82 residues long: Cobrotoxin-b (82 aa).

Residues 1 to 21 form the signal peptide; that stretch reads MKTLLLTLLVVTIVCLDLGYT. 4 disulfides stabilise this stretch: C24-C44, C38-C61, C63-C74, and C75-C80.

It belongs to the three-finger toxin family. Short-chain subfamily. Type I alpha-neurotoxin sub-subfamily. As to expression, expressed by the venom gland.

Its subcellular location is the secreted. Its function is as follows. Binds to muscle nicotinic acetylcholine receptor (nAChR) and inhibit acetylcholine from binding to the receptor, thereby impairing neuromuscular transmission. Produces peripheral paralysis by blocking neuromuscular transmission at the postsynaptic site. Has a lower toxicity than cobrotoxin. This Naja atra (Chinese cobra) protein is Cobrotoxin-b.